We begin with the raw amino-acid sequence, 162 residues long: Photosystem II extrinsic protein V (162 aa).

The signal sequence occupies residues 1–25 (MLKRCLWLVVTVLFAWQVFNGTAIA). Heme c-binding residues include cysteine 62, cysteine 65, histidine 66, and histidine 117.

Belongs to the cytochrome c family. PsbV subfamily. In terms of assembly, PSII is composed of 1 copy each of membrane proteins PsbA, PsbB, PsbC, PsbD, PsbE, PsbF, PsbH, PsbI, PsbJ, PsbK, PsbL, PsbM, PsbT, PsbX, PsbY, PsbZ, Psb30/Ycf12, peripheral proteins PsbO, CyanoQ (PsbQ), PsbU, PsbV and a large number of cofactors. It forms dimeric complexes. Heme c is required as a cofactor.

Its subcellular location is the cellular thylakoid membrane. Its function is as follows. One of the extrinsic, lumenal subunits of photosystem II (PSII). PSII is a light-driven water plastoquinone oxidoreductase, using light energy to abstract electrons from H(2)O, generating a proton gradient subsequently used for ATP formation. The extrinsic proteins stabilize the structure of photosystem II oxygen-evolving complex (OEC), the ion environment of oxygen evolution and protect the OEC against heat-induced inactivation. Low-potential cytochrome c that plays a role in the OEC of PSII. The chain is Photosystem II extrinsic protein V from Cyanothece sp. (strain PCC 7425 / ATCC 29141).